The sequence spans 559 residues: Glucose-6-phosphate isomerase (559 aa).

Catalysis depends on glutamate 363, which acts as the Proton donor. Catalysis depends on residues histidine 394 and lysine 523.

Belongs to the GPI family.

It localises to the cytoplasm. The catalysed reaction is alpha-D-glucose 6-phosphate = beta-D-fructose 6-phosphate. Its pathway is carbohydrate biosynthesis; gluconeogenesis. It participates in carbohydrate degradation; glycolysis; D-glyceraldehyde 3-phosphate and glycerone phosphate from D-glucose: step 2/4. Catalyzes the reversible isomerization of glucose-6-phosphate to fructose-6-phosphate. The sequence is that of Glucose-6-phosphate isomerase from Bartonella quintana (strain Toulouse) (Rochalimaea quintana).